A 375-amino-acid polypeptide reads, in one-letter code: 23S rRNA (uracil(747)-C(5))-methyltransferase RlmC (375 aa).

[4Fe-4S] cluster is bound by residues Cys3, Cys11, Cys14, and Cys87. S-adenosyl-L-methionine is bound by residues Gln212, Phe241, Glu262, and Asn307. Cys334 (nucleophile) is an active-site residue.

Belongs to the class I-like SAM-binding methyltransferase superfamily. RNA M5U methyltransferase family. RlmC subfamily.

It catalyses the reaction uridine(747) in 23S rRNA + S-adenosyl-L-methionine = 5-methyluridine(747) in 23S rRNA + S-adenosyl-L-homocysteine + H(+). Functionally, catalyzes the formation of 5-methyl-uridine at position 747 (m5U747) in 23S rRNA. The sequence is that of 23S rRNA (uracil(747)-C(5))-methyltransferase RlmC from Salmonella arizonae (strain ATCC BAA-731 / CDC346-86 / RSK2980).